The following is a 445-amino-acid chain: Histidinol dehydrogenase (445 aa).

Residues Tyr138, Gln199, and Asn222 each coordinate NAD(+). Substrate is bound by residues Ser245, Gln267, and His270. Zn(2+)-binding residues include Gln267 and His270. Residues Glu335 and His336 each act as proton acceptor in the active site. Substrate is bound by residues His336, Asp369, Glu423, and His428. Residue Asp369 coordinates Zn(2+). A Zn(2+)-binding site is contributed by His428.

The protein belongs to the histidinol dehydrogenase family. It depends on Zn(2+) as a cofactor.

It carries out the reaction L-histidinol + 2 NAD(+) + H2O = L-histidine + 2 NADH + 3 H(+). It participates in amino-acid biosynthesis; L-histidine biosynthesis; L-histidine from 5-phospho-alpha-D-ribose 1-diphosphate: step 9/9. In terms of biological role, catalyzes the sequential NAD-dependent oxidations of L-histidinol to L-histidinaldehyde and then to L-histidine. The sequence is that of Histidinol dehydrogenase from Burkholderia mallei (strain ATCC 23344).